Reading from the N-terminus, the 86-residue chain is U13-theraphotoxin-Cg1b (86 aa).

The first 21 residues, 1-21 (MKVSVLITLAVLGVMFVWASA), serve as a signal peptide directing secretion. A propeptide spanning residues 22–51 (AELEQSGSDQKDSPAWLKSMERIFQSEERE) is cleaved from the precursor. 3 disulfides stabilise this stretch: Cys-52–Cys-66, Cys-59–Cys-71, and Cys-65–Cys-78.

This sequence belongs to the neurotoxin 10 (Hwtx-1) family. 41 (Jztx-36) subfamily. Expressed by the venom gland.

It localises to the secreted. Its function is as follows. Probable ion channel inhibitor. The protein is U13-theraphotoxin-Cg1b of Chilobrachys guangxiensis (Chinese earth tiger tarantula).